A 137-amino-acid polypeptide reads, in one-letter code: MSSLIRRVISTAKAPGAIGPYSQAVLVDRTIYISGQIGMDPSSGQLVSGGVAEEAKQALKNMGEILKAAGCDFTNVVKTTVLLADINDFNTVNEIYKQYFKSNFPARAAYQVAALPKGSRIEIEAVAIQGPLTTASL.

Serine 2 is subject to N-acetylserine. N6-succinyllysine is present on residues lysine 13, lysine 60, and lysine 67. Threonine 74 bears the Phosphothreonine mark. Serine 136 carries the post-translational modification Phosphoserine.

This sequence belongs to the RutC family. As to quaternary structure, homotrimer. Interacts with YTHDF2. In terms of tissue distribution, expressed predominantly in liver and kidney. Lower levels in lung and brain.

It is found in the cytoplasm. The protein localises to the nucleus. It localises to the peroxisome. The protein resides in the mitochondrion. It catalyses the reaction 2-iminobutanoate + H2O = 2-oxobutanoate + NH4(+). It carries out the reaction 2-iminopropanoate + H2O = pyruvate + NH4(+). Its function is as follows. Catalyzes the hydrolytic deamination of enamine/imine intermediates that form during the course of normal metabolism. May facilitate the release of ammonia from these potentially toxic reactive metabolites, reducing their impact on cellular components. It may act on enamine/imine intermediates formed by several types of pyridoxal-5'-phosphate-dependent dehydratases including L-threonine dehydratase. Also promotes endoribonucleolytic cleavage of some transcripts by promoting recruitment of the ribonuclease P/MRP complex. Acts by bridging YTHDF2 and the ribonuclease P/MRP complex. RIDA/HRSP12 binds to N6-methyladenosine (m6A)-containing mRNAs containing a 5'-GGUUC-3' motif: cooperative binding of RIDA/HRSP12 and YTHDF2 to such transcripts lead to recruitment of the ribonuclease P/MRP complex and subsequent endoribonucleolytic cleavage. The sequence is that of 2-iminobutanoate/2-iminopropanoate deaminase from Homo sapiens (Human).